We begin with the raw amino-acid sequence, 104 residues long: Large ribosomal subunit protein bL21 (104 aa).

This sequence belongs to the bacterial ribosomal protein bL21 family. In terms of assembly, part of the 50S ribosomal subunit. Contacts protein L20.

Functionally, this protein binds to 23S rRNA in the presence of protein L20. The chain is Large ribosomal subunit protein bL21 from Gluconacetobacter diazotrophicus (strain ATCC 49037 / DSM 5601 / CCUG 37298 / CIP 103539 / LMG 7603 / PAl5).